The following is a 183-amino-acid chain: NADH-ubiquinone oxidoreductase chain 5 (183 aa).

4 consecutive transmembrane segments (helical) span residues 7 to 27, 30 to 50, 111 to 131, and 144 to 164; these read FMCYLSILTFFMPMLVTGDNS, LFLGWEGVGLASYLLIHFWFT, AITLICILLLIGAVGKSAQIG, and TPVSALIHAATMVTAGVFMIA.

It belongs to the complex I subunit 5 family.

Its subcellular location is the mitochondrion inner membrane. It catalyses the reaction a ubiquinone + NADH + 5 H(+)(in) = a ubiquinol + NAD(+) + 4 H(+)(out). Core subunit of the mitochondrial membrane respiratory chain NADH dehydrogenase (Complex I) that is believed to belong to the minimal assembly required for catalysis. Complex I functions in the transfer of electrons from NADH to the respiratory chain. The immediate electron acceptor for the enzyme is believed to be ubiquinone. This chain is NADH-ubiquinone oxidoreductase chain 5 (NDH5), found in Pisum sativum (Garden pea).